A 224-amino-acid polypeptide reads, in one-letter code: Orotate phosphoribosyltransferase (224 aa).

K29 lines the 5-phospho-alpha-D-ribose 1-diphosphate pocket. Orotate is bound at residue 37 to 38 (FF). 5-phospho-alpha-D-ribose 1-diphosphate-binding positions include 75-76 (YK), R105, K106, K109, H111, and 130-138 (DDVITAGTS). T134 and R162 together coordinate orotate.

The protein belongs to the purine/pyrimidine phosphoribosyltransferase family. PyrE subfamily. As to quaternary structure, homodimer. The cofactor is Mg(2+).

It catalyses the reaction orotidine 5'-phosphate + diphosphate = orotate + 5-phospho-alpha-D-ribose 1-diphosphate. Its pathway is pyrimidine metabolism; UMP biosynthesis via de novo pathway; UMP from orotate: step 1/2. Catalyzes the transfer of a ribosyl phosphate group from 5-phosphoribose 1-diphosphate to orotate, leading to the formation of orotidine monophosphate (OMP). The chain is Orotate phosphoribosyltransferase from Bordetella pertussis (strain Tohama I / ATCC BAA-589 / NCTC 13251).